A 175-amino-acid polypeptide reads, in one-letter code: NADH-ubiquinone oxidoreductase chain 6 (175 aa).

5 consecutive transmembrane segments (helical) span residues 1 to 21 (MMLY…VGFS), 25 to 45 (SPIY…GIVL), 47 to 67 (FGGS…MMVV), 88 to 108 (AVLG…YYVL), and 149 to 169 (YGTW…VVIM).

The protein belongs to the complex I subunit 6 family. As to quaternary structure, core subunit of respiratory chain NADH dehydrogenase (Complex I) which is composed of 45 different subunits.

It localises to the mitochondrion inner membrane. It catalyses the reaction a ubiquinone + NADH + 5 H(+)(in) = a ubiquinol + NAD(+) + 4 H(+)(out). In terms of biological role, core subunit of the mitochondrial membrane respiratory chain NADH dehydrogenase (Complex I) which catalyzes electron transfer from NADH through the respiratory chain, using ubiquinone as an electron acceptor. Essential for the catalytic activity and assembly of complex I. This Bos mutus grunniens (Wild yak) protein is NADH-ubiquinone oxidoreductase chain 6 (MT-ND6).